Consider the following 634-residue polypeptide: Chaperone protein DnaK 2 (634 aa).

The residue at position 197 (Thr-197) is a Phosphothreonine; by autocatalysis. Low complexity predominate over residues 600-620; that stretch reads ASAEASANAQAGPSSSSSSSS. Residues 600-634 form a disordered region; sequence ASAEASANAQAGPSSSSSSSSGDDDVIDAEFSESK. The span at 621–634 shows a compositional bias: acidic residues; it reads GDDDVIDAEFSESK.

Belongs to the heat shock protein 70 family.

Its function is as follows. Acts as a chaperone. In Synechococcus sp. (strain ATCC 27144 / PCC 6301 / SAUG 1402/1) (Anacystis nidulans), this protein is Chaperone protein DnaK 2.